The primary structure comprises 268 residues: MERYESLFARLKERKEGAFVPFVTLGDPGIEQSLKIIDALIEAGADALELGIPFSDPLADGPTIQNATLRAFAAGVTPAQCFEMLALIRQKHPTIPIGLLMYANLVFNKGIDEFYAQCEKAGVDSVLVADVPVEESAPFRQAALRHNVAPIFICPPNADDDLLRQIASYGRGYTYLLSRAGVTGAENRAALPLNHLVTKLKEYNAAPPLQGFGISAPDQVKAAIDAGAAGAISGSAIVKIIEQHINEPEKMLAALKAFVQPMKAATRS.

Catalysis depends on proton acceptor residues Glu-49 and Asp-60.

The protein belongs to the TrpA family. Tetramer of two alpha and two beta chains.

The enzyme catalyses (1S,2R)-1-C-(indol-3-yl)glycerol 3-phosphate + L-serine = D-glyceraldehyde 3-phosphate + L-tryptophan + H2O. It functions in the pathway amino-acid biosynthesis; L-tryptophan biosynthesis; L-tryptophan from chorismate: step 5/5. The alpha subunit is responsible for the aldol cleavage of indoleglycerol phosphate to indole and glyceraldehyde 3-phosphate. This is Tryptophan synthase alpha chain from Escherichia coli (strain SMS-3-5 / SECEC).